A 323-amino-acid chain; its full sequence is GTP 3',8-cyclase (323 aa).

Residues 4–233 (KYGREIDYLR…NGPAKYISIE (230 aa)) enclose the Radical SAM core domain. Arginine 13 serves as a coordination point for GTP. Cysteine 20 and cysteine 24 together coordinate [4Fe-4S] cluster. Residue tyrosine 26 participates in S-adenosyl-L-methionine binding. Cysteine 27 contributes to the [4Fe-4S] cluster binding site. Residue arginine 63 coordinates GTP. Glycine 67 provides a ligand contact to S-adenosyl-L-methionine. Residue threonine 94 coordinates GTP. An S-adenosyl-L-methionine-binding site is contributed by serine 118. Residue lysine 154 coordinates GTP. Methionine 188 contacts S-adenosyl-L-methionine. 2 residues coordinate [4Fe-4S] cluster: cysteine 250 and cysteine 253. Residue 255 to 257 (RIR) coordinates GTP. Cysteine 267 is a binding site for [4Fe-4S] cluster.

Belongs to the radical SAM superfamily. MoaA family. As to quaternary structure, monomer and homodimer. Requires [4Fe-4S] cluster as cofactor.

It catalyses the reaction GTP + AH2 + S-adenosyl-L-methionine = (8S)-3',8-cyclo-7,8-dihydroguanosine 5'-triphosphate + 5'-deoxyadenosine + L-methionine + A + H(+). It functions in the pathway cofactor biosynthesis; molybdopterin biosynthesis. In terms of biological role, catalyzes the cyclization of GTP to (8S)-3',8-cyclo-7,8-dihydroguanosine 5'-triphosphate. The protein is GTP 3',8-cyclase of Clostridium perfringens (strain 13 / Type A).